The sequence spans 96 residues: Large ribosomal subunit protein bL28 (96 aa).

Residues 1 to 22 are compositionally biased toward polar residues; sequence MSRSCELTGKGVQSGNNVSHAN. The tract at residues 1-24 is disordered; that stretch reads MSRSCELTGKGVQSGNNVSHANNK.

This sequence belongs to the bacterial ribosomal protein bL28 family.

In Sinorhizobium medicae (strain WSM419) (Ensifer medicae), this protein is Large ribosomal subunit protein bL28.